The following is a 309-amino-acid chain: (S)-sulfolactate dehydrogenase (309 aa).

Residues Gly151–Ile152, Asp171, Thr231–Arg233, and Asp257 each bind NAD(+). Arg233 is a catalytic residue. Glu262 is a catalytic residue. Residue His281 is the Proton donor of the active site. His281–Gly284 contributes to the NAD(+) binding site.

Belongs to the D-isomer specific 2-hydroxyacid dehydrogenase family.

The enzyme catalyses (2S)-3-sulfolactate + NAD(+) = 3-sulfopyruvate + NADH + H(+). Functionally, dehydrogenase of the (R,S)-sulfolactate degradation pathway that only acts on the (S)-enantiomer of 3-sulfolactate. Together with ComC, provides a racemase system that converts (2S)-3-sulfolactate to (2R)-3-sulfolactate, which is degraded further by (2R)-sulfolactate sulfo-lyase. Specific for NAD. Also able to form sulfolactate from sulfopyruvate. The polypeptide is (S)-sulfolactate dehydrogenase (slcC) (Chromohalobacter salexigens (strain ATCC BAA-138 / DSM 3043 / CIP 106854 / NCIMB 13768 / 1H11)).